A 336-amino-acid polypeptide reads, in one-letter code: Anthranilate phosphoribosyltransferase (336 aa).

5-phospho-alpha-D-ribose 1-diphosphate is bound by residues Gly82, 85 to 86, Thr90, 92 to 95, 110 to 118, and Ser122; these read GD, NIST, and KHGNRFASG. An anthranilate-binding site is contributed by Gly82. Ser94 is a Mg(2+) binding site. Residue Asn113 participates in anthranilate binding. Arg168 contacts anthranilate. Positions 227 and 228 each coordinate Mg(2+).

The protein belongs to the anthranilate phosphoribosyltransferase family. Homodimer. The cofactor is Mg(2+).

It catalyses the reaction N-(5-phospho-beta-D-ribosyl)anthranilate + diphosphate = 5-phospho-alpha-D-ribose 1-diphosphate + anthranilate. The protein operates within amino-acid biosynthesis; L-tryptophan biosynthesis; L-tryptophan from chorismate: step 2/5. Its function is as follows. Catalyzes the transfer of the phosphoribosyl group of 5-phosphorylribose-1-pyrophosphate (PRPP) to anthranilate to yield N-(5'-phosphoribosyl)-anthranilate (PRA). The sequence is that of Anthranilate phosphoribosyltransferase from Desulfitobacterium hafniense (strain DSM 10664 / DCB-2).